The following is a 750-amino-acid chain: Probable methylmalonyl-CoA mutase large subunit (750 aa).

6 residues coordinate (R)-methylmalonyl-CoA: Y91, M94, T101, R103, Y105, and S130. Cob(II)alamin contacts are provided by F133 and A155. (R)-methylmalonyl-CoA-binding residues include T211 and Q213. V222 and R223 together coordinate cob(II)alamin. (R)-methylmalonyl-CoA is bound by residues R223, H260, R299, and S301. Positions 349, 386, 389, 628, 629, 630, 631, 674, 676, 705, and 728 each coordinate cob(II)alamin. A B12-binding domain is found at 616 to 748 (RPRILIAKMG…HRLAERLGYT (133 aa)).

The protein belongs to the methylmalonyl-CoA mutase family. Heterodimer of an alpha and a beta chain. Adenosylcob(III)alamin is required as a cofactor.

It carries out the reaction (R)-methylmalonyl-CoA = succinyl-CoA. It functions in the pathway metabolic intermediate metabolism; propanoyl-CoA degradation; succinyl-CoA from propanoyl-CoA: step 3/3. Catalyzes the isomerization of succinyl-CoA to methylmalonyl-CoA during synthesis of propionate from tricarboxylic acid-cycle intermediates. The chain is Probable methylmalonyl-CoA mutase large subunit (mutB) from Mycobacterium bovis (strain ATCC BAA-935 / AF2122/97).